Here is a 281-residue protein sequence, read N- to C-terminus: Non-selective voltage-gated ion channel 2 (281 aa).

Residues arginine 11 and arginine 19 each contribute to the ATP site.

This sequence belongs to the eukaryotic mitochondrial porin family.

It localises to the mitochondrion outer membrane. In terms of biological role, non-selective voltage-gated ion channel that mediates the transport of anions and cations through the mitochondrion outer membrane. The channel adopts an open conformation at low or zero membrane potential and a closed conformation at potentials above 30-40 mV. The open state has a weak anion selectivity whereas the closed state is cation-selective. Does not confer permeability to NADH. Catalyzes the scrambling of phospholipids across the outer mitochondrial membrane; the mechanism is unrelated to channel activity and is capable of translocating both anionic and zwitterionic phospholipids. This chain is Non-selective voltage-gated ion channel 2 (POR2), found in Saccharomyces cerevisiae (strain ATCC 204508 / S288c) (Baker's yeast).